Reading from the N-terminus, the 123-residue chain is Probable prefoldin subunit 4 (123 aa).

Belongs to the prefoldin subunit beta family. Heterohexamer of two PFD-alpha type and four PFD-beta type subunits.

Binds specifically to cytosolic chaperonin (c-CPN) and transfers target proteins to it. Binds to nascent polypeptide chain and promotes folding in an environment in which there are many competing pathways for nonnative proteins. In Schizosaccharomyces pombe (strain 972 / ATCC 24843) (Fission yeast), this protein is Probable prefoldin subunit 4.